Here is a 102-residue protein sequence, read N- to C-terminus: A-type ATP synthase subunit F (102 aa).

It belongs to the V-ATPase F subunit family. Has multiple subunits with at least A(3), B(3), C, D, E, F, H, I and proteolipid K(x).

It is found in the cell membrane. Its function is as follows. Component of the A-type ATP synthase that produces ATP from ADP in the presence of a proton gradient across the membrane. This chain is A-type ATP synthase subunit F, found in Thermococcus onnurineus (strain NA1).